The chain runs to 539 residues: Eukaryotic translation initiation factor 3 subunit L (539 aa).

Positions 302–514 (TFSSILLYIQ…IHIADTKVSH (213 aa)) constitute a PCI domain.

This sequence belongs to the eIF-3 subunit L family. As to quaternary structure, component of the eukaryotic translation initiation factor 3 (eIF-3) complex.

The protein resides in the cytoplasm. In terms of biological role, component of the eukaryotic translation initiation factor 3 (eIF-3) complex, which is involved in protein synthesis of a specialized repertoire of mRNAs and, together with other initiation factors, stimulates binding of mRNA and methionyl-tRNAi to the 40S ribosome. The eIF-3 complex specifically targets and initiates translation of a subset of mRNAs involved in cell proliferation. In Anopheles gambiae (African malaria mosquito), this protein is Eukaryotic translation initiation factor 3 subunit L.